The following is a 247-amino-acid chain: UPF0246 protein LSEI_2080 (247 aa).

It belongs to the UPF0246 family.

The sequence is that of UPF0246 protein LSEI_2080 from Lacticaseibacillus paracasei (strain ATCC 334 / BCRC 17002 / CCUG 31169 / CIP 107868 / KCTC 3260 / NRRL B-441) (Lactobacillus paracasei).